The following is a 783-amino-acid chain: B-cell scaffold protein with ankyrin repeats (783 aa).

The interval 1–154 is interaction with ITPR2; that stretch reads MLPVASGTRG…GYISVIRQIL (154 aa). The TIR domain maps to 25 to 153; sequence NAKDILLLYE…DGYISVIRQI (129 aa). Residues 199–326 enclose the DBB domain; the sequence is VLPGEIPCEK…EIPYYEFKHL (128 aa). ANK repeat units lie at residues 341–370 and 377–407; these read ELPTLLHCAAKFGLKNLALHLLQCSGATRA and DGSDLLHIAERHGHEELKEVFEDFLSQNTGR. Disordered regions lie at residues 422-521, 538-586, 604-624, and 641-670; these read FSTY…AASQ, MERS…EDNE, SFIINRPPAPTPRPTHIPPKE, and RQSDGDKFYSLPKKPDKTRMEGPTFPSTRD. Basic and acidic residues predominate over residues 444-479; sequence RNTDRSEEPERSVEMKEEEAGAEARRSLSEGERESS. Pro residues predominate over residues 505 to 515; the sequence is HCRPPLLPPRP. Basic and acidic residues predominate over residues 549–565; that stretch reads ARPETREESSREEKKEE. A compositionally biased stretch (acidic residues) spans 566 to 586; that stretch reads AQEEEEEEENPYAFAETEDNE. A compositionally biased stretch (pro residues) spans 610-620; sequence PPAPTPRPTHI. Positions 641–660 are enriched in basic and acidic residues; the sequence is RQSDGDKFYSLPKKPDKTRM. Tyr649 bears the Phosphotyrosine mark.

As to quaternary structure, interacts with LYN, ITPR1 and ITPR2. In terms of processing, phosphorylated on tyrosines upon BCR activation. As to expression, specifically expressed in spleen. Highly expressed in immature B-cells and recirculating B-cells, and at low levels in pro-B and pre-B cells.

Involved in B-cell receptor (BCR)-induced Ca(2+) mobilization from intracellular stores. Promotes Lyn-mediated phosphorylation of IP3 receptors 1 and 2. This chain is B-cell scaffold protein with ankyrin repeats (Bank1), found in Mus musculus (Mouse).